The chain runs to 351 residues: Methylthioribose-1-phosphate isomerase (351 aa).

Substrate is bound by residues 55-57, R95, and Q202; that span reads RGA. D243 acts as the Proton donor in catalysis. Substrate is bound at residue 253–254; the sequence is NK.

It belongs to the eIF-2B alpha/beta/delta subunits family. MtnA subfamily.

It carries out the reaction 5-(methylsulfanyl)-alpha-D-ribose 1-phosphate = 5-(methylsulfanyl)-D-ribulose 1-phosphate. Its pathway is amino-acid biosynthesis; L-methionine biosynthesis via salvage pathway; L-methionine from S-methyl-5-thio-alpha-D-ribose 1-phosphate: step 1/6. Functionally, catalyzes the interconversion of methylthioribose-1-phosphate (MTR-1-P) into methylthioribulose-1-phosphate (MTRu-1-P). The polypeptide is Methylthioribose-1-phosphate isomerase (Marinobacter nauticus (strain ATCC 700491 / DSM 11845 / VT8) (Marinobacter aquaeolei)).